The chain runs to 697 residues: Histone deacetylase HOS3 (697 aa).

A histone deacetylase region spans residues 40–440 (AKAVVVLSPY…LIGLQNQDWV (401 aa)). The active site involves His196. Residues 525–573 (IRSHRSNASPEKELHENKPRSTEKQEQREIRSDTKVKQLSSNNRAAETQ) form a disordered region. The segment covering 534–560 (PEKELHENKPRSTEKQEQREIRSDTKV) has biased composition (basic and acidic residues). The segment covering 561 to 573 (KQLSSNNRAAETQ) has biased composition (polar residues). A phosphoserine mark is found at Ser582, Ser583, Ser613, and Ser629. Residues 625–638 (GDEDSDHELKEKNW) show a composition bias toward basic and acidic residues. The disordered stretch occupies residues 625–697 (GDEDSDHELK…KHTTRSGGRW (73 aa)). Residues 665–674 (QPQNANTPTY) are compositionally biased toward polar residues.

It belongs to the histone deacetylase family. HD type 1 subfamily. Homodimer.

The protein localises to the nucleus. The catalysed reaction is N(6)-acetyl-L-lysyl-[histone] + H2O = L-lysyl-[histone] + acetate. Responsible for the deacetylation of lysine residues on the N-terminal part of the core histones (H2A, H2B, H3 and H4). Histone deacetylation gives a tag for epigenetic repression and plays an important role in transcriptional regulation, cell cycle progression and developmental events. Histone deacetylases act via the formation of large multiprotein complexes. The sequence is that of Histone deacetylase HOS3 (HOS3) from Saccharomyces cerevisiae (strain ATCC 204508 / S288c) (Baker's yeast).